The chain runs to 186 residues: Probable RNA 2'-phosphotransferase (186 aa).

The protein belongs to the KptA/TPT1 family.

Removes the 2'-phosphate from RNA via an intermediate in which the phosphate is ADP-ribosylated by NAD followed by a presumed transesterification to release the RNA and generate ADP-ribose 1''-2''-cyclic phosphate (APPR&gt;P). May function as an ADP-ribosylase. This Agrobacterium fabrum (strain C58 / ATCC 33970) (Agrobacterium tumefaciens (strain C58)) protein is Probable RNA 2'-phosphotransferase.